The chain runs to 540 residues: Phosphoenolpyruvate carboxykinase (ATP) (540 aa).

A substrate-binding site is contributed by Arg65. Lys87 is modified (N6-acetyllysine). Residues Tyr207 and Lys213 each contribute to the substrate site. Residues Lys213, His232, and 248–256 (GLSGTGKTT) contribute to the ATP site. Lys213 and His232 together coordinate Mn(2+). Position 269 (Asp269) interacts with Mn(2+). ATP-binding positions include Glu297, Arg333, 449-450 (RI), and Thr455. Position 333 (Arg333) interacts with substrate. Lys523 bears the N6-acetyllysine mark.

It belongs to the phosphoenolpyruvate carboxykinase (ATP) family. As to quaternary structure, monomer. The cofactor is Mn(2+).

It is found in the cytoplasm. The catalysed reaction is oxaloacetate + ATP = phosphoenolpyruvate + ADP + CO2. It functions in the pathway carbohydrate biosynthesis; gluconeogenesis. Functionally, involved in the gluconeogenesis. Catalyzes the conversion of oxaloacetate (OAA) to phosphoenolpyruvate (PEP) through direct phosphoryl transfer between the nucleoside triphosphate and OAA. This Escherichia coli O6:K15:H31 (strain 536 / UPEC) protein is Phosphoenolpyruvate carboxykinase (ATP).